The chain runs to 46 residues: Toxin Up-1 (46 aa).

It is found in the secreted. The protein localises to the nematocyst. Its subcellular location is the target cell membrane. Its function is as follows. This toxin is a potent hemolysin devoid of enzymatic activity. Its hemolytic activity is inhibited by sphingomyelin but not by cholesterol. In erythrocyte membranes, it causes numerous cell membrane ruptures. It also exerces cytotoxicity to different cell lines. It exerces a positive inotropic effect. Also causes hemorrhage and necrosis by dilation of the blood vessels in the skin, and vascular leakage of fluids and rupture of alveolar walls of the lungs. Is a potent ichtyotoxin. May act as a pore-forming toxin. This Urticina piscivora (Fish-eating sea anemone) protein is Toxin Up-1.